The chain runs to 894 residues: Bifunctional enzyme RhaA/RhaB (894 aa).

The segment at M1 to P465 is rhamnulokinase. Residues Q466–R894 form an L-rhamnose isomerase region. Mn(2+) contacts are provided by H730, D762, and D764.

This sequence in the N-terminal section; belongs to the rhamnulokinase family. It in the C-terminal section; belongs to the rhamnose isomerase family. Mn(2+) is required as a cofactor.

It localises to the cytoplasm. It carries out the reaction L-rhamnulose + ATP = L-rhamnulose 1-phosphate + ADP + H(+). The catalysed reaction is L-rhamnopyranose = L-rhamnulose. It functions in the pathway carbohydrate degradation; L-rhamnose degradation; glycerone phosphate from L-rhamnose: step 1/3. It participates in carbohydrate degradation; L-rhamnose degradation; glycerone phosphate from L-rhamnose: step 2/3. The chain is Bifunctional enzyme RhaA/RhaB (rhaAB) from Shouchella clausii (strain KSM-K16) (Alkalihalobacillus clausii).